A 264-amino-acid polypeptide reads, in one-letter code: Methylthioribulose-1-phosphate dehydratase (264 aa).

Cysteine 110 contributes to the substrate binding site. Zn(2+) is bound by residues histidine 128 and histidine 130. Glutamate 151 serves as the catalytic Proton donor/acceptor. Histidine 213 contacts Zn(2+).

This sequence belongs to the aldolase class II family. MtnB subfamily. Zn(2+) is required as a cofactor.

It localises to the cytoplasm. The enzyme catalyses 5-(methylsulfanyl)-D-ribulose 1-phosphate = 5-methylsulfanyl-2,3-dioxopentyl phosphate + H2O. It participates in amino-acid biosynthesis; L-methionine biosynthesis via salvage pathway; L-methionine from S-methyl-5-thio-alpha-D-ribose 1-phosphate: step 2/6. Catalyzes the dehydration of methylthioribulose-1-phosphate (MTRu-1-P) into 2,3-diketo-5-methylthiopentyl-1-phosphate (DK-MTP-1-P). In Vanderwaltozyma polyspora (strain ATCC 22028 / DSM 70294 / BCRC 21397 / CBS 2163 / NBRC 10782 / NRRL Y-8283 / UCD 57-17) (Kluyveromyces polysporus), this protein is Methylthioribulose-1-phosphate dehydratase.